A 113-amino-acid chain; its full sequence is MAHSAAAVPLGALEQGCPIRVEHDRRRRQFTVRLNGCHDRAVLLYEYVGKRIVDLQHTEVPDAYRGRGIAKHLAKAALDFVVEEDLKAHLTCWYIQKYVKENPLPQYLERLQP.

Residues Glu22–Gln112 enclose the N-acetyltransferase domain.

Belongs to the NATD1 family.

The polypeptide is Protein NATD1 (NATD1) (Homo sapiens (Human)).